The primary structure comprises 229 residues: NAD(P)H-hydrate epimerase (229 aa).

The YjeF N-terminal domain occupies 10-224 (SREVDQIAIE…DIGIPPALLD (215 aa)). 57-61 (NNGGD) is a binding site for (6S)-NADPHX. N58 and D129 together coordinate K(+). (6S)-NADPHX-binding positions include 133–139 (GTGIRGQ) and D167. Residue S170 coordinates K(+).

This sequence belongs to the NnrE/AIBP family. K(+) serves as cofactor.

The catalysed reaction is (6R)-NADHX = (6S)-NADHX. It catalyses the reaction (6R)-NADPHX = (6S)-NADPHX. Functionally, catalyzes the epimerization of the S- and R-forms of NAD(P)HX, a damaged form of NAD(P)H that is a result of enzymatic or heat-dependent hydration. This is a prerequisite for the S-specific NAD(P)H-hydrate dehydratase to allow the repair of both epimers of NAD(P)HX. The protein is NAD(P)H-hydrate epimerase of Rubinisphaera brasiliensis (strain ATCC 49424 / DSM 5305 / JCM 21570 / IAM 15109 / NBRC 103401 / IFAM 1448) (Planctomyces brasiliensis).